A 286-amino-acid polypeptide reads, in one-letter code: Phosphate import ATP-binding protein PstB (286 aa).

The region spanning 40–281 is the ABC transporter domain; the sequence is VVAKDFSIFY…PRDRMTEDYI (242 aa). 72–79 lines the ATP pocket; it reads GPSGCGKS.

It belongs to the ABC transporter superfamily. Phosphate importer (TC 3.A.1.7) family. The complex is composed of two ATP-binding proteins (PstB), two transmembrane proteins (PstC and PstA) and a solute-binding protein (PstS).

It is found in the cell inner membrane. The enzyme catalyses phosphate(out) + ATP + H2O = ADP + 2 phosphate(in) + H(+). Part of the ABC transporter complex PstSACB involved in phosphate import. Responsible for energy coupling to the transport system. The protein is Phosphate import ATP-binding protein PstB of Chlorobium luteolum (strain DSM 273 / BCRC 81028 / 2530) (Pelodictyon luteolum).